The sequence spans 189 residues: UPF0149 protein VF_2102 (189 aa).

The protein belongs to the UPF0149 family.

This chain is UPF0149 protein VF_2102, found in Aliivibrio fischeri (strain ATCC 700601 / ES114) (Vibrio fischeri).